A 403-amino-acid polypeptide reads, in one-letter code: Phosphoglycerate kinase (403 aa).

Substrate is bound by residues Asp21–Asn23, Arg36, His59–Arg62, Arg119, and Arg159. ATP is bound by residues Lys214, Gly301, Glu332, and Gly359–Ser362.

The protein belongs to the phosphoglycerate kinase family. As to quaternary structure, monomer.

It is found in the cytoplasm. The catalysed reaction is (2R)-3-phosphoglycerate + ATP = (2R)-3-phospho-glyceroyl phosphate + ADP. It functions in the pathway carbohydrate degradation; glycolysis; pyruvate from D-glyceraldehyde 3-phosphate: step 2/5. The sequence is that of Phosphoglycerate kinase from Lactobacillus acidophilus (strain ATCC 700396 / NCK56 / N2 / NCFM).